The chain runs to 144 residues: MLTITSIKDGIVIDHIKSGYGIKIFNYLNLKNVEYSVALIMNVFSSKLGKKDIIKIANKEIDIDFTVLGLIDPTITINIIEDEKIKEKLNLELPKKVEDVIRCKNPRCITSIEKYIPHVFYLIDKEKVEYKCKYCDEIYKVVEE.

Zn(2+) is bound by residues cysteine 103, cysteine 108, cysteine 132, and cysteine 135.

This sequence belongs to the PyrI family. In terms of assembly, contains catalytic and regulatory chains. Zn(2+) is required as a cofactor.

Involved in allosteric regulation of aspartate carbamoyltransferase. This Clostridium tetani (strain Massachusetts / E88) protein is Aspartate carbamoyltransferase regulatory chain.